We begin with the raw amino-acid sequence, 794 residues long: Inactive zinc metalloprotease C354.09c (794 aa).

The disordered stretch occupies residues 1–56 (MTDEKHVYVPPPKDPPSYEEVALHSALNNSAPPNDGEQNETSMEEMEIIEPPSEDS). The helical transmembrane segment at 91–111 (IPFQFLYLAVIATVIILASYY) threads the bilayer.

The protein belongs to the peptidase M28 family. M28B subfamily.

The protein resides in the membrane. In Schizosaccharomyces pombe (strain 972 / ATCC 24843) (Fission yeast), this protein is Inactive zinc metalloprotease C354.09c.